A 361-amino-acid chain; its full sequence is Phosphoserine aminotransferase (361 aa).

Arg43 is a binding site for L-glutamate. Pyridoxal 5'-phosphate is bound by residues 77–78, Trp103, Thr153, Asp173, and Gln196; that span reads AS. Lys197 carries the N6-(pyridoxal phosphate)lysine modification. 238 to 239 contacts pyridoxal 5'-phosphate; it reads NT.

It belongs to the class-V pyridoxal-phosphate-dependent aminotransferase family. SerC subfamily. Homodimer. Requires pyridoxal 5'-phosphate as cofactor.

It localises to the cytoplasm. The catalysed reaction is O-phospho-L-serine + 2-oxoglutarate = 3-phosphooxypyruvate + L-glutamate. It carries out the reaction 4-(phosphooxy)-L-threonine + 2-oxoglutarate = (R)-3-hydroxy-2-oxo-4-phosphooxybutanoate + L-glutamate. It participates in amino-acid biosynthesis; L-serine biosynthesis; L-serine from 3-phospho-D-glycerate: step 2/3. Catalyzes the reversible conversion of 3-phosphohydroxypyruvate to phosphoserine and of 3-hydroxy-2-oxo-4-phosphonooxybutanoate to phosphohydroxythreonine. This Alkalihalobacillus alcalophilus (Bacillus alcalophilus) protein is Phosphoserine aminotransferase (serC).